A 95-amino-acid polypeptide reads, in one-letter code: Integration host factor subunit alpha (95 aa).

A disordered region spans residues asparagine 51 to isoleucine 71. A compositionally biased stretch (basic and acidic residues) spans aspartate 53–glutamate 69.

It belongs to the bacterial histone-like protein family. Heterodimer of an alpha and a beta chain.

In terms of biological role, this protein is one of the two subunits of integration host factor, a specific DNA-binding protein that functions in genetic recombination as well as in transcriptional and translational control. The sequence is that of Integration host factor subunit alpha from Vibrio vulnificus (strain CMCP6).